Reading from the N-terminus, the 255-residue chain is Cytochrome c oxidase subunit 2 (255 aa).

Positions 1–16 are cleaved as a signal peptide; sequence MFNLFPPFGANTAIFN. Residues 17–43 lie on the Mitochondrial intermembrane side of the membrane; it reads DAPQPWQVGFQDGASPTQEGITELHDS. The chain crosses the membrane as a helical span at residues 44-64; sequence IFFYLVIICFGVLWVLSSVIV. Residues 65-80 are Mitochondrial matrix-facing; that stretch reads NFNSNKSQLVYKYANH. A helical membrane pass occupies residues 81–101; that stretch reads GTLIELIWTITPALVLIAIAF. The Mitochondrial intermembrane portion of the chain corresponds to 102-255; the sequence is PSFKLLYLMD…KYLAWIDSQA (154 aa). The Cu cation site is built by H189, C224, E226, C228, H232, and M235. Residue E226 participates in Mg(2+) binding.

Belongs to the cytochrome c oxidase subunit 2 family. As to quaternary structure, component of the cytochrome c oxidase (complex IV, CIV), a multisubunit enzyme composed of a catalytic core of 3 subunits and several supernumerary subunits. The complex exists as a monomer or a dimer and forms supercomplexes (SCs) in the inner mitochondrial membrane with ubiquinol-cytochrome c oxidoreductase (cytochrome b-c1 complex, complex III, CIII). It depends on Cu cation as a cofactor.

It is found in the mitochondrion inner membrane. The catalysed reaction is 4 Fe(II)-[cytochrome c] + O2 + 8 H(+)(in) = 4 Fe(III)-[cytochrome c] + 2 H2O + 4 H(+)(out). In terms of biological role, component of the cytochrome c oxidase, the last enzyme in the mitochondrial electron transport chain which drives oxidative phosphorylation. The respiratory chain contains 3 multisubunit complexes succinate dehydrogenase (complex II, CII), ubiquinol-cytochrome c oxidoreductase (cytochrome b-c1 complex, complex III, CIII) and cytochrome c oxidase (complex IV, CIV), that cooperate to transfer electrons derived from NADH and succinate to molecular oxygen, creating an electrochemical gradient over the inner membrane that drives transmembrane transport and the ATP synthase. Cytochrome c oxidase is the component of the respiratory chain that catalyzes the reduction of oxygen to water. Electrons originating from reduced cytochrome c in the intermembrane space (IMS) are transferred via the dinuclear copper A center (CU(A)) of subunit 2 and heme A of subunit 1 to the active site in subunit 1, a binuclear center (BNC) formed by heme A3 and copper B (CU(B)). The BNC reduces molecular oxygen to 2 water molecules using 4 electrons from cytochrome c in the IMS and 4 protons from the mitochondrial matrix. The polypeptide is Cytochrome c oxidase subunit 2 (COX2) (Mycosarcoma maydis (Corn smut fungus)).